Consider the following 380-residue polypeptide: Cytochrome b (380 aa).

Transmembrane regions (helical) follow at residues 34-54 (FGSLLGLFLTMQIITGIILAM), 78-100 (WLMRTMHMNGAAFMFICMYAHMG), 113-133 (TWNIGIIIMIATMATAFMGYV), and 179-199 (FFAFHFVLPFVLIALSGVHLL). Histidine 84 and histidine 98 together coordinate heme b. Residues histidine 183 and histidine 197 each coordinate heme b. Histidine 202 contacts a ubiquinone. Helical transmembrane passes span 225–245 (FSWKDLLGFAXMILIFCTITL), 289–309 (LGGVVALVGSLIIPATMMLTH), 324–344 (VIFWLFCANFIALSWIGAAPV), and 349–369 (ITLGQVFSMLYFLFFLTAPMI).

Belongs to the cytochrome b family. In terms of assembly, the main subunits of complex b-c1 are: cytochrome b, cytochrome c1 and the Rieske protein. Requires heme b as cofactor.

It is found in the mitochondrion inner membrane. Component of the ubiquinol-cytochrome c reductase complex (complex III or cytochrome b-c1 complex) that is part of the mitochondrial respiratory chain. The b-c1 complex mediates electron transfer from ubiquinol to cytochrome c. Contributes to the generation of a proton gradient across the mitochondrial membrane that is then used for ATP synthesis. The polypeptide is Cytochrome b (mt:Cyt-b) (Xenoturbella bocki (Marine worm)).